A 550-amino-acid polypeptide reads, in one-letter code: Methionine--tRNA ligase (550 aa).

Positions 12–22 (PYANGPLHFGH) match the 'HIGH' region motif. Zn(2+) contacts are provided by Cys-144, Cys-147, Cys-157, and Cys-160. Residues 330 to 334 (QFSKS) carry the 'KMSKS' region motif. Lys-333 serves as a coordination point for ATP.

The protein belongs to the class-I aminoacyl-tRNA synthetase family. MetG type 1 subfamily. As to quaternary structure, monomer. Zn(2+) serves as cofactor.

It localises to the cytoplasm. The catalysed reaction is tRNA(Met) + L-methionine + ATP = L-methionyl-tRNA(Met) + AMP + diphosphate. In terms of biological role, is required not only for elongation of protein synthesis but also for the initiation of all mRNA translation through initiator tRNA(fMet) aminoacylation. The polypeptide is Methionine--tRNA ligase (Chlamydia caviae (strain ATCC VR-813 / DSM 19441 / 03DC25 / GPIC) (Chlamydophila caviae)).